Reading from the N-terminus, the 492-residue chain is Glutamyl-tRNA(Gln) amidotransferase subunit A (492 aa).

Active-site charge relay system residues include lysine 79 and serine 154. The active-site Acyl-ester intermediate is serine 178.

The protein belongs to the amidase family. GatA subfamily. Heterotrimer of A, B and C subunits.

The enzyme catalyses L-glutamyl-tRNA(Gln) + L-glutamine + ATP + H2O = L-glutaminyl-tRNA(Gln) + L-glutamate + ADP + phosphate + H(+). Its function is as follows. Allows the formation of correctly charged Gln-tRNA(Gln) through the transamidation of misacylated Glu-tRNA(Gln) in organisms which lack glutaminyl-tRNA synthetase. The reaction takes place in the presence of glutamine and ATP through an activated gamma-phospho-Glu-tRNA(Gln). This is Glutamyl-tRNA(Gln) amidotransferase subunit A from Acinetobacter baumannii (strain ACICU).